A 165-amino-acid chain; its full sequence is PARP-type zinc finger-containing protein C13F5.07c (165 aa).

A PARP-type; degenerate zinc finger spans residues 8–100 (YRIEIAPNNR…KVVDAINEGH (93 aa)). Over residues 100–114 (HVSESDERESRKLGE) the composition is skewed to basic and acidic residues. The interval 100-165 (HVSESDERES…TDGSEAYEDD (66 aa)) is disordered. A compositionally biased stretch (polar residues) spans 117 to 128 (NVNSQKLKTSSP). Residues 131–141 (VVRKNKRHHTT) are compositionally biased toward basic residues. Acidic residues predominate over residues 149–165 (SDLDAEFTDGSEAYEDD).

Its subcellular location is the cytoplasm. It localises to the nucleus. The protein is PARP-type zinc finger-containing protein C13F5.07c of Schizosaccharomyces pombe (strain 972 / ATCC 24843) (Fission yeast).